Here is a 342-residue protein sequence, read N- to C-terminus: N-acetyl-gamma-glutamyl-phosphate reductase (342 aa).

Cysteine 149 is an active-site residue.

It belongs to the NAGSA dehydrogenase family. Type 1 subfamily.

The protein resides in the cytoplasm. It carries out the reaction N-acetyl-L-glutamate 5-semialdehyde + phosphate + NADP(+) = N-acetyl-L-glutamyl 5-phosphate + NADPH + H(+). Its pathway is amino-acid biosynthesis; L-arginine biosynthesis; N(2)-acetyl-L-ornithine from L-glutamate: step 3/4. Functionally, catalyzes the NADPH-dependent reduction of N-acetyl-5-glutamyl phosphate to yield N-acetyl-L-glutamate 5-semialdehyde. In Aromatoleum aromaticum (strain DSM 19018 / LMG 30748 / EbN1) (Azoarcus sp. (strain EbN1)), this protein is N-acetyl-gamma-glutamyl-phosphate reductase.